The sequence spans 183 residues: Adenine phosphoribosyltransferase (183 aa).

The protein belongs to the purine/pyrimidine phosphoribosyltransferase family. Homodimer.

It localises to the cytoplasm. It catalyses the reaction AMP + diphosphate = 5-phospho-alpha-D-ribose 1-diphosphate + adenine. It participates in purine metabolism; AMP biosynthesis via salvage pathway; AMP from adenine: step 1/1. Functionally, catalyzes a salvage reaction resulting in the formation of AMP, that is energically less costly than de novo synthesis. This chain is Adenine phosphoribosyltransferase, found in Blochmanniella floridana.